A 91-amino-acid chain; its full sequence is Small ribosomal subunit protein uS19m (91 aa).

It belongs to the universal ribosomal protein uS19 family. As to quaternary structure, component of the mitochondrial small ribosomal subunit (mt-SSU). Mature N.crassa 74S mitochondrial ribosomes consist of a small (37S) and a large (54S) subunit. The 37S small subunit contains a 16S ribosomal RNA (16S mt-rRNA) and 32 different proteins. The 54S large subunit contains a 23S rRNA (23S mt-rRNA) and 42 different proteins.

Its subcellular location is the mitochondrion. Its function is as follows. Component of the mitochondrial ribosome (mitoribosome), a dedicated translation machinery responsible for the synthesis of mitochondrial genome-encoded proteins, including at least some of the essential transmembrane subunits of the mitochondrial respiratory chain. The mitoribosomes are attached to the mitochondrial inner membrane and translation products are cotranslationally integrated into the membrane. The polypeptide is Small ribosomal subunit protein uS19m (rsm19) (Neurospora crassa (strain ATCC 24698 / 74-OR23-1A / CBS 708.71 / DSM 1257 / FGSC 987)).